The primary structure comprises 443 residues: Mevalonate kinase (443 aa).

ATP-binding positions include Lys12, Ser138, and 143-149; that span reads GAGLGSS. Mg(2+) is bound by residues Ser149 and Glu191. The active-site Proton acceptor is Asp202.

It belongs to the GHMP kinase family. Mevalonate kinase subfamily. In terms of assembly, homodimer. Requires Mg(2+) as cofactor.

The protein localises to the cytoplasm. The protein resides in the cytosol. The catalysed reaction is (R)-mevalonate + ATP = (R)-5-phosphomevalonate + ADP + H(+). Its pathway is isoprenoid biosynthesis; isopentenyl diphosphate biosynthesis via mevalonate pathway; isopentenyl diphosphate from (R)-mevalonate: step 1/3. Farnesyl pyrophosphate and geranyl pyrophosphate inhibit mevalonate kinase by binding competitively at the ATP-binding site. In terms of biological role, mevalonate kinase; part of the second module of ergosterol biosynthesis pathway that includes the middle steps of the pathway. ERG12 converts mevalonate into 5-phosphomevalonate. The second module is carried out in the vacuole and involves the formation of farnesyl diphosphate, which is also an important intermediate in the biosynthesis of ubiquinone, dolichol, heme and prenylated proteins. Activity by the mevalonate kinase ERG12 first converts mevalonate into 5-phosphomevalonate. 5-phosphomevalonate is then further converted to 5-diphosphomevalonate by the phosphomevalonate kinase ERG8. The diphosphomevalonate decarboxylase MVD1/ERG19 then produces isopentenyl diphosphate. The isopentenyl-diphosphate delta-isomerase IDI1 then catalyzes the 1,3-allylic rearrangement of the homoallylic substrate isopentenyl (IPP) to its highly electrophilic allylic isomer, dimethylallyl diphosphate (DMAPP). Finally the farnesyl diphosphate synthase ERG20 catalyzes the sequential condensation of isopentenyl pyrophosphate with dimethylallyl pyrophosphate, and then with the resultant geranylpyrophosphate to the ultimate product farnesyl pyrophosphate. This Saccharomyces cerevisiae (strain ATCC 204508 / S288c) (Baker's yeast) protein is Mevalonate kinase.